The following is a 286-amino-acid chain: Beta-lactamase TEM-12 (286 aa).

Residues 1-23 form the signal peptide; the sequence is MSIQHFRVALIPFFAAFCLPVFA. Ser-68 acts as the Acyl-ester intermediate in catalysis. A disulfide bridge links Cys-75 with Cys-121. The Proton acceptor role is filled by Glu-166. Substrate is bound at residue 232–234; sequence KSG.

Belongs to the class-A beta-lactamase family.

It catalyses the reaction a beta-lactam + H2O = a substituted beta-amino acid. Its function is as follows. TEM-type are the most prevalent beta-lactamases in enterobacteria; they hydrolyze the beta-lactam bond in susceptible beta-lactam antibiotics, thus conferring resistance to penicillins and cephalosporins such as ceftazidime. This Klebsiella oxytoca protein is Beta-lactamase TEM-12 (blaT-12b).